The sequence spans 102 residues: Acid shock protein (102 aa).

A signal peptide spans 1–21 (MKKVLALVVAAAMGLSSAAFA). A compositionally biased stretch (low complexity) spans 22 to 41 (AETATTPAPTATTTKAAPAK). Positions 22 to 58 (AETATTPAPTATTTKAAPAKTTHHKKQHKAAPAQKAQ) are excised as a propeptide. The disordered stretch occupies residues 22 to 102 (AETATTPAPT…PAKPAAQPAA (81 aa)). Over residues 80–90 (AAKKHAKKHSH) the composition is skewed to basic residues. The span at 91–102 (QQPAKPAAQPAA) shows a compositional bias: low complexity.

It belongs to the Asr family. Proteolytic processing gives rise to the active protein.

The protein resides in the periplasm. In terms of biological role, required for growth and/or survival at acidic conditions. This is Acid shock protein from Escherichia coli O45:K1 (strain S88 / ExPEC).